The sequence spans 664 residues: SPARC-like protein 1 (664 aa).

The signal sequence occupies residues 1–16; that stretch reads MKTGLFFLCLLGTAAA. Residues 25–34 form an O-glycosylated at one additional site region; sequence SDHSKPTAET. Residues 28-360 are disordered; it reads SKPTAETVAP…DGPRHSASDD (333 aa). Thr31 and Thr40 each carry an O-linked (GalNAc...) threonine glycan. Residue Ser44 is glycosylated (O-linked (GalNAc...) serine). A compositionally biased stretch (basic and acidic residues) spans 62–84; it reads DDSHHKAEKSSVLKSKEESHEQS. Residues Ser76, Ser84, and Ser92 each carry the phosphoserine modification. Residues 85 to 94 are compositionally biased toward polar residues; sequence AEQGKSSSQE. Residues 96-105 are compositionally biased toward basic and acidic residues; sequence GLKDQEDSDG. O-linked (GalNAc...) threonine glycosylation is present at Thr116. A compositionally biased stretch (basic and acidic residues) spans 120–136; that stretch reads LDIKEDMSEPQEKKLSE. Residues 146 to 156 are compositionally biased toward polar residues; the sequence is SSFTDSNQQES. Asn169 carries N-linked (GlcNAc...) asparagine glycosylation. Residues 170-180 show a composition bias toward basic residues; sequence YSHHQLNRSSK. Residue Ser171 is modified to Phosphoserine. N-linked (GlcNAc...) asparagine glycosylation is found at Asn176 and Asn196. The segment covering 188-199 has biased composition (polar residues); it reads QGNQEQDPNISN. Over residues 216–235 the composition is skewed to basic and acidic residues; it reads DNQERKTELPREHANSKQEE. Acidic residues-rich tracts occupy residues 236–248 and 259–280; these read DNTQSDDILEESD and DEFDQGNQEQEDNSNAEMEEEN. Ser272 carries the phosphoserine modification. Asn280 is a glycosylation site (N-linked (GlcNAc...) asparagine). Residues 306–316 show a composition bias toward basic and acidic residues; the sequence is SNHKETEEKTV. O-linked (GalNAc...) threonine glycosylation is present at Thr331. The segment covering 339 to 349 has biased composition (acidic residues); the sequence is DDGDDDGDDGG. Ser358 and Ser365 each carry phosphoserine. Positions 388-426 are disordered; sequence EKVHENENIGTTEPGEHQEAKKAENSSNEEETSSEGNMR. O-linked (GalNAc...) threonine glycosylation occurs at Thr398. Positions 401 to 411 are enriched in basic and acidic residues; the sequence is PGEHQEAKKAE. Residue Asn412 is glycosylated (N-linked (GlcNAc...) asparagine). Ser420 is subject to Phosphoserine. A Follistatin-like domain is found at 432 to 454; it reads SCMSFQCKRGHICKADQQGKPHC. 7 cysteine pairs are disulfide-bonded: Cys433/Cys444, Cys438/Cys454, Cys456/Cys490, Cys462/Cys483, Cys472/Cys509, Cys515/Cys626, and Cys634/Cys650. One can recognise a Kazal-like domain in the interval 450–511; the sequence is GKPHCVCQDP…QLDYFGACKS (62 aa). Residue Asn476 is glycosylated (N-linked (GlcNAc...) asparagine). The region spanning 622 to 657 is the EF-hand domain; that stretch reads PMEHCITRFFEECDPNKDKHITLKEWGHCFGIKEED. Ca(2+)-binding residues include Asp635, Asn637, Asp639, His641, and Glu646.

This sequence belongs to the SPARC family. In terms of processing, N- and O-glycosylated. O-glycosylated with a core 1 or possibly core 8 glycan. As to expression, highly expressed in lymph node, brain, heart, lung, skeletal muscle, ovary, small intestine, and colon, with lower levels in placenta, pancreas, testis, spleen, and thymus, and no expression in kidney, liver, and peripheral blood leukocytes.

It is found in the secreted. It localises to the extracellular space. Its subcellular location is the extracellular matrix. In Homo sapiens (Human), this protein is SPARC-like protein 1 (SPARCL1).